The chain runs to 345 residues: Histidinol-phosphate aminotransferase (345 aa).

Lys206 is subject to N6-(pyridoxal phosphate)lysine.

It belongs to the class-II pyridoxal-phosphate-dependent aminotransferase family. Histidinol-phosphate aminotransferase subfamily. As to quaternary structure, homodimer. It depends on pyridoxal 5'-phosphate as a cofactor.

It carries out the reaction L-histidinol phosphate + 2-oxoglutarate = 3-(imidazol-4-yl)-2-oxopropyl phosphate + L-glutamate. The protein operates within amino-acid biosynthesis; L-histidine biosynthesis; L-histidine from 5-phospho-alpha-D-ribose 1-diphosphate: step 7/9. The chain is Histidinol-phosphate aminotransferase from Bacteroides fragilis (strain ATCC 25285 / DSM 2151 / CCUG 4856 / JCM 11019 / LMG 10263 / NCTC 9343 / Onslow / VPI 2553 / EN-2).